The chain runs to 1181 residues: WD repeat-containing protein 35 (1181 aa).

WD repeat units follow at residues 12 to 51, 69 to 108, 113 to 152, 154 to 193, and 502 to 539; these read PNNV…DDSK, GHSG…WYEE, RNKS…IWGK, LKGI…IMKM, and GTRD…LIQK.

As to quaternary structure, component of the IFT complex A (IFT-A) complex. IFT-A complex is divided into a core subcomplex composed of IFT122:IFT140:WDR19 which is associated with TULP3 and a peripheral subcomplex composed of IFT43:WDR35:TTC21B. Interacts directy with IFT122, ITF43 and TTC21B. Interacts with IFT43. Interacts with CFAP61.

The protein localises to the cytoplasm. It is found in the cytoskeleton. The protein resides in the microtubule organizing center. Its subcellular location is the centrosome. It localises to the cilium axoneme. The protein localises to the cilium basal body. In terms of biological role, as a component of the IFT complex A (IFT-A), a complex required for retrograde ciliary transport and entry into cilia of G protein-coupled receptors (GPCRs), it is involved in ciliogenesis and ciliary protein trafficking. May promote CASP3 activation and TNF-stimulated apoptosis. This Mus musculus (Mouse) protein is WD repeat-containing protein 35.